A 637-amino-acid chain; its full sequence is Proton myo-inositol cotransporter (637 aa).

The Cytoplasmic portion of the chain corresponds to 1 to 65; that stretch reads MSRKASEDVE…AARRQFQRDE (65 aa). Ser6 carries the post-translational modification Phosphoserine. The tract at residues 16 to 38 is disordered; that stretch reads LSSLMGERRRRQPEPGAPGGERS. A phosphoserine mark is found at Ser44 and Ser47. A helical transmembrane segment spans residues 66-86; the sequence is TPAFVYAAAAFSALGGFLFGY. Over 87 to 114 the chain is Extracellular; the sequence is DTGVVSGAMLLLRRQMRLGAMWQELLVS. Residues 115–135 traverse the membrane as a helical segment; it reads GAVGAAAVAALAGGALNGALG. The Cytoplasmic segment spans residues 136–137; the sequence is RR. A helical transmembrane segment spans residues 138-158; it reads SAILLASALCTVGSAVLAAAA. At 159 to 167 the chain is on the extracellular side; it reads NKETLLAGR. The helical transmembrane segment at 168 to 188 threads the bilayer; sequence LVVGLGIGIASMTVPVYIAEV. Topologically, residues 189–201 are cytoplasmic; it reads SPPNLRGRLVTIN. The chain crosses the membrane as a helical span at residues 202–222; it reads TLFITGGQFFASVVDGAFSYL. At 223-228 the chain is on the extracellular side; it reads QKDGWR. Residues 229–249 traverse the membrane as a helical segment; sequence YMLGLAAIPAVIQFLGFLFLP. Topologically, residues 250-313 are cytoplasmic; it reads ESPRWLIQKG…RMLSYPPTRR (64 aa). The chain crosses the membrane as a helical span at residues 314-334; that stretch reads ALAVGCGLQMFQQLSGINTIM. Residues 335–352 lie on the Extracellular side of the membrane; it reads YYSATILQMSGVEDDRLA. A helical membrane pass occupies residues 353–373; it reads IWLASITAFTNFIFTLVGVWL. Residues 374 to 382 are Cytoplasmic-facing; it reads VEKVGRRKL. A helical transmembrane segment spans residues 383 to 403; it reads TFGSLAGTTVALTILALGFLL. Residues 404–497 are Extracellular-facing; the sequence is SAQVSPRVTF…SFCPTPYSWT (94 aa). Asn422, Asn447, and Asn474 each carry an N-linked (GlcNAc...) asparagine glycan. Residues 498–518 traverse the membrane as a helical segment; that stretch reads ALVGLVLYLVFFAPGMGPMPW. Over 519-538 the chain is Cytoplasmic; sequence TVNSEIYPLWARSTGNACSA. A helical membrane pass occupies residues 539 to 559; the sequence is GINWIFNVLVSLTFLHTAEYL. Residues 560 to 562 are Extracellular-facing; sequence TYY. Residues 563–583 form a helical membrane-spanning segment; sequence GAFFLYAGFAAVGLLFVYGCL. Over 584–637 the chain is Cytoplasmic; it reads PETKGKKLEEIESLFDHRLCTCGTADSDEGRYIEYIRVKGSNYHLSDNDASDVE. 2 positions are modified to phosphoserine: Ser629 and Ser634.

It belongs to the major facilitator superfamily. Sugar transporter (TC 2.A.1.1) family.

The protein resides in the cell membrane. The enzyme catalyses myo-inositol(out) + H(+)(out) = myo-inositol(in) + H(+)(in). Functionally, h(+)-myo-inositol cotransporter. Can also transport related stereoisomers. The protein is Proton myo-inositol cotransporter of Rattus norvegicus (Rat).